We begin with the raw amino-acid sequence, 189 residues long: Protein Flattop (189 aa).

The disordered stretch occupies residues 112 to 189; it reads EISGKPFDPD…PPPSPCKSTK (78 aa). The segment covering 137–148 has biased composition (polar residues); that stretch reads APNPTIIPSSPV. Over residues 178 to 189 the composition is skewed to pro residues; it reads NNPPPSPCKSTK.

It belongs to the Flattop family. In terms of assembly, microtubule inner protein component of sperm flagellar doublet microtubules. Interacts with DLG3. Expressed in mono- and multiciliated tissues during planar cell polarity acquisition.

The protein localises to the cytoplasm. It is found in the cytoskeleton. The protein resides in the cilium basal body. It localises to the cilium axoneme. Its subcellular location is the flagellum axoneme. The protein localises to the apical cell membrane. Microtubule inner protein (MIP) part of the dynein-decorated doublet microtubules (DMTs) in cilia axoneme. Acts as a regulator of cilium basal body docking and positioning in mono- and multiciliated cells. Regulates basal body docking and cilia formation in multiciliated lung cells. Regulates kinocilium positioning and stereocilia bundle morphogenesis in the inner ear. In Mus musculus (Mouse), this protein is Protein Flattop.